The primary structure comprises 47 residues: Sperm protamine P1 (47 aa).

This sequence belongs to the protamine P1 family. Testis.

The protein localises to the nucleus. The protein resides in the chromosome. Protamines substitute for histones in the chromatin of sperm during the haploid phase of spermatogenesis. They compact sperm DNA into a highly condensed, stable and inactive complex. The polypeptide is Sperm protamine P1 (PRM1) (Myotis daubentonii (Daubenton's bat)).